The primary structure comprises 125 residues: Glycine cleavage system H protein (125 aa).

Positions 23–105 (VSTVGITEHA…FEGGWLFKVR (83 aa)) constitute a Lipoyl-binding domain. Lys64 carries the post-translational modification N6-lipoyllysine.

It belongs to the GcvH family. In terms of assembly, the glycine cleavage system is composed of four proteins: P, T, L and H. It depends on (R)-lipoate as a cofactor.

Its function is as follows. The glycine cleavage system catalyzes the degradation of glycine. The H protein shuttles the methylamine group of glycine from the P protein to the T protein. This Streptomyces avermitilis (strain ATCC 31267 / DSM 46492 / JCM 5070 / NBRC 14893 / NCIMB 12804 / NRRL 8165 / MA-4680) protein is Glycine cleavage system H protein.